A 325-amino-acid chain; its full sequence is Glutarate 2-hydroxylase (325 aa).

Residues histidine 160, aspartate 162, and histidine 292 each coordinate Fe cation.

The protein belongs to the glutarate hydroxylase family. Homotetramer. Requires Fe(2+) as cofactor.

The catalysed reaction is glutarate + 2-oxoglutarate + O2 = (S)-2-hydroxyglutarate + succinate + CO2. Its pathway is amino-acid degradation. Its function is as follows. Acts as an alpha-ketoglutarate-dependent dioxygenase catalyzing hydroxylation of glutarate (GA) to L-2-hydroxyglutarate (L2HG). Functions in a L-lysine degradation pathway that proceeds via cadaverine, glutarate and L-2-hydroxyglutarate. This Shigella boydii serotype 18 (strain CDC 3083-94 / BS512) protein is Glutarate 2-hydroxylase.